The following is a 164-amino-acid chain: NADH-quinone oxidoreductase subunit I (164 aa).

4Fe-4S ferredoxin-type domains follow at residues 55–85 (LRRYPNGEERCIACKLCEAVCPAQAITIDAE) and 95–124 (TRYDIDMTKCIYCGFCEEACPVDAIVEGPN). Residues Cys65, Cys68, Cys71, Cys75, Cys104, Cys107, Cys110, and Cys114 each coordinate [4Fe-4S] cluster.

The protein belongs to the complex I 23 kDa subunit family. As to quaternary structure, NDH-1 is composed of 14 different subunits. Subunits NuoA, H, J, K, L, M, N constitute the membrane sector of the complex. The cofactor is [4Fe-4S] cluster.

It is found in the cell inner membrane. It catalyses the reaction a quinone + NADH + 5 H(+)(in) = a quinol + NAD(+) + 4 H(+)(out). In terms of biological role, NDH-1 shuttles electrons from NADH, via FMN and iron-sulfur (Fe-S) centers, to quinones in the respiratory chain. The immediate electron acceptor for the enzyme in this species is believed to be ubiquinone. Couples the redox reaction to proton translocation (for every two electrons transferred, four hydrogen ions are translocated across the cytoplasmic membrane), and thus conserves the redox energy in a proton gradient. In Roseobacter denitrificans (strain ATCC 33942 / OCh 114) (Erythrobacter sp. (strain OCh 114)), this protein is NADH-quinone oxidoreductase subunit I.